Here is a 2541-residue protein sequence, read N- to C-terminus: Talin-1 (2541 aa).

An FERM domain is found at 86-403 (RPLKIRMLDG…GYIDIILKKK (318 aa)). The interval 280-435 (FMAHKNCGNM…PKKSTVLQQQ (156 aa)) is interaction with LAYN. The helical bundle R1 stretch occupies residues 482–655 (RGHMPPLTSA…QTSGELLQQI (174 aa)). Residues 656–786 (GESDTDPRFQ…ALNDLLQHIK (131 aa)) form a helical bundle R2 region. The tract at residues 787–911 (QHATGGQPIG…NAAAQNAIKK (125 aa)) is helical bundle R3. The interval 913 to 1043 (LVHKLEHAAK…RTAAQKAQEA (131 aa)) is helical bundle R4. The segment at 1045 to 1205 (GPLEIDSALG…NRCVNCLPGQ (161 aa)) is helical bundle R5. Residues 1206–1356 (RDVDAAIRMV…QLITMCTQQA (151 aa)) are helical bundle R6. The segment at 1357–1452 (PGQKECDNAL…AYLVGVSDPN (96 aa)) is helical bundle R7A. Residues 1358-1658 (GQKECDNALR…NMRDKAPGQR (301 aa)) are interaction with VCL and F-actin. Residues 1460–1579 (LVDPTQFARA…NLTAFASNPE (120 aa)) form a helical bundle R8 region. The O-linked (GlcNAc) threonine glycan is linked to threonine 1486. Residues 1580 to 1652 (FATVPAQISP…IKKLITNMRD (73 aa)) are helical bundle R7B. The interval 1654–1821 (APGQRECDEA…TLNEAASAAG (168 aa)) is helical bundle R9. Residues 1822-1972 (VVGGMVDSIT…VLAALQAGNR (151 aa)) form a helical bundle R10 region. O-linked (GlcNAc) threonine glycosylation is present at threonine 1889. Residues 1973–2139 (GTQACITAAS…TVKAVEDEAT (167 aa)) are helical bundle R11. The segment at 2140-2293 (KGTRALEATI…QAAEAMKGTE (154 aa)) is helical bundle R12. Residues 2292 to 2531 (TEWVDPEDPT…MIRQQQYKFL (240 aa)) form the I/LWEQ domain. The helical bundle R13 stretch occupies residues 2299 to 2481 (DPTVIAENEL…AAQKAAAFQD (183 aa)).

Interacts with PIP5K1C and NRAP. Binds with high affinity to vinculin VCL and with low affinity to integrins. Interacts with APBB1IP; this inhibits VCL binding. Interacts with F-actin. Interacts with LAYN. Interacts with THSD1. In terms of processing, phosphorylated.

It localises to the cell projection. The protein localises to the ruffle membrane. It is found in the cytoplasm. Its subcellular location is the cytoskeleton. The protein resides in the cell surface. It localises to the cell junction. The protein localises to the focal adhesion. In terms of biological role, high molecular weight cytoskeletal protein concentrated at regions of cell-substratum contact and, in lymphocytes, at cell-cell contacts. Involved in connections of major cytoskeletal structures to the plasma membrane. The protein is Talin-1 (TLN1) of Gallus gallus (Chicken).